The sequence spans 575 residues: Acetylcholine receptor subunit beta-type acr-2 (575 aa).

The signal sequence occupies residues 1–20; sequence MKKTVKILLILITVFLKVHC. The Extracellular segment spans residues 21–270; the sequence is NGGHDDEAAD…IRRKTLFYTV (250 aa). A disordered region spans residues 31-57; sequence FLSHTNIDDPNNSSDPNKNSDQGDTMG. A compositionally biased stretch (low complexity) spans 38 to 50; that stretch reads DDPNNSSDPNKNS. N-linked (GlcNAc...) asparagine glycans are attached at residues asparagine 41, asparagine 42, asparagine 80, and asparagine 131. Cysteines 185 and 199 form a disulfide. The next 3 membrane-spanning stretches (helical) occupy residues 271–291, 299–319, and 331–351; these read ILII…YLPV, LTIS…KILP, and LLLA…IVNI. Residues 352–527 are Cytoplasmic-facing; that stretch reads YFRSALSHKM…WKYVAMVLDR (176 aa). Residues 528 to 548 form a helical membrane-spanning segment; the sequence is LILLIFFGVTLGGTLGIICSA.

This sequence belongs to the ligand-gated ion channel (TC 1.A.9) family. Acetylcholine receptor (TC 1.A.9.1) subfamily. Component of nicotinic acetylcholine receptor. In cholinergic motoneurons, composed of 2 non-alpha subunits acr-2 and acr-3, and 3 alpha subunits unc-38, unc-63 and acr-12. Specifically expressed in cholinergic ventral cord motoneurons of the VA, VB, DA and DB classes but not AS and VC classes. Expressed in PVQ and DVC neurons in the tail.

The protein resides in the postsynaptic cell membrane. The protein localises to the cell membrane. In terms of biological role, non-alpha subunit of nicotinic acetylcholine receptor (nAChR). Acts in cholinergic motoneurons to regulate presynaptic neurotransmitter release, thereby ensuring normal level of excitation of cholinergic motoneurons during locomotion. The chain is Acetylcholine receptor subunit beta-type acr-2 (acr-2) from Caenorhabditis elegans.